A 144-amino-acid polypeptide reads, in one-letter code: Large ribosomal subunit protein uL16 (144 aa).

This sequence belongs to the universal ribosomal protein uL16 family. In terms of assembly, part of the 50S ribosomal subunit.

In terms of biological role, binds 23S rRNA and is also seen to make contacts with the A and possibly P site tRNAs. The sequence is that of Large ribosomal subunit protein uL16 from Heliobacterium modesticaldum (strain ATCC 51547 / Ice1).